We begin with the raw amino-acid sequence, 332 residues long: Diaminopimelate epimerase (332 aa).

Positions 13 and 73 each coordinate substrate. The active-site Proton donor is the C82. Substrate contacts are provided by residues 83-84, N172, N209, and 227-228; these read GN and ER. C236 functions as the Proton acceptor in the catalytic mechanism. 237–238 provides a ligand contact to substrate; the sequence is GT.

Belongs to the diaminopimelate epimerase family. In terms of assembly, homodimer.

Its subcellular location is the cytoplasm. The enzyme catalyses (2S,6S)-2,6-diaminopimelate = meso-2,6-diaminopimelate. It functions in the pathway amino-acid biosynthesis; L-lysine biosynthesis via DAP pathway; DL-2,6-diaminopimelate from LL-2,6-diaminopimelate: step 1/1. Its function is as follows. Catalyzes the stereoinversion of LL-2,6-diaminopimelate (L,L-DAP) to meso-diaminopimelate (meso-DAP), a precursor of L-lysine and an essential component of the bacterial peptidoglycan. This is Diaminopimelate epimerase from Lactiplantibacillus plantarum (strain ATCC BAA-793 / NCIMB 8826 / WCFS1) (Lactobacillus plantarum).